The primary structure comprises 425 residues: Serine--tRNA ligase (425 aa).

L-serine is bound at residue 233-235 (TAE). 264–266 (RRE) serves as a coordination point for ATP. An L-serine-binding site is contributed by Glu287. 351–354 (EISS) contacts ATP. Position 385 (Ser385) interacts with L-serine.

It belongs to the class-II aminoacyl-tRNA synthetase family. Type-1 seryl-tRNA synthetase subfamily. Homodimer. The tRNA molecule binds across the dimer.

It localises to the cytoplasm. It catalyses the reaction tRNA(Ser) + L-serine + ATP = L-seryl-tRNA(Ser) + AMP + diphosphate + H(+). The catalysed reaction is tRNA(Sec) + L-serine + ATP = L-seryl-tRNA(Sec) + AMP + diphosphate + H(+). It functions in the pathway aminoacyl-tRNA biosynthesis; selenocysteinyl-tRNA(Sec) biosynthesis; L-seryl-tRNA(Sec) from L-serine and tRNA(Sec): step 1/1. Functionally, catalyzes the attachment of serine to tRNA(Ser). Is also able to aminoacylate tRNA(Sec) with serine, to form the misacylated tRNA L-seryl-tRNA(Sec), which will be further converted into selenocysteinyl-tRNA(Sec). In Synechococcus sp. (strain WH7803), this protein is Serine--tRNA ligase.